Consider the following 174-residue polypeptide: Fimbria A protein (174 aa).

An N-terminal signal peptide occupies residues Met-1 to Ala-22. A disulfide bond links Cys-41 and Cys-80.

It belongs to the fimbrial protein family.

The protein resides in the fimbrium. In terms of biological role, major structural component of mannose-resistant fimbriae of Serratia marcescens. This chain is Fimbria A protein (smfA), found in Serratia marcescens.